A 276-amino-acid chain; its full sequence is NAD-capped RNA hydrolase NudC (276 aa).

R82 contributes to the substrate binding site. C112 and C115 together coordinate Zn(2+). E125 is a binding site for substrate. Zn(2+) is bound by residues C130 and C133. Residue Y138 participates in substrate binding. Residues 139–262 (PRISPSMIVL…SIARYLIDLY (124 aa)) enclose the Nudix hydrolase domain. Residues A172, E188, and E192 each coordinate a divalent metal cation. The Nudix box motif lies at 173–194 (GFAEPGESAEDCLVREVREEVA). A substrate-binding site is contributed by 206 to 213 (QCWPFPHS). E233 contributes to the a divalent metal cation binding site. Residue A255 participates in substrate binding.

It belongs to the Nudix hydrolase family. NudC subfamily. As to quaternary structure, homodimer. It depends on Mg(2+) as a cofactor. Mn(2+) is required as a cofactor. Zn(2+) serves as cofactor.

It catalyses the reaction a 5'-end NAD(+)-phospho-ribonucleoside in mRNA + H2O = a 5'-end phospho-adenosine-phospho-ribonucleoside in mRNA + beta-nicotinamide D-ribonucleotide + 2 H(+). It carries out the reaction NAD(+) + H2O = beta-nicotinamide D-ribonucleotide + AMP + 2 H(+). The enzyme catalyses NADH + H2O = reduced beta-nicotinamide D-ribonucleotide + AMP + 2 H(+). Functionally, mRNA decapping enzyme that specifically removes the nicotinamide adenine dinucleotide (NAD) cap from a subset of mRNAs by hydrolyzing the diphosphate linkage to produce nicotinamide mononucleotide (NMN) and 5' monophosphate mRNA. The NAD-cap is present at the 5'-end of some mRNAs and stabilizes RNA against 5'-processing. Has preference for mRNAs with a 5'-end purine. Catalyzes the hydrolysis of a broad range of dinucleotide pyrophosphates. The sequence is that of NAD-capped RNA hydrolase NudC from Pseudomonas putida (strain ATCC 700007 / DSM 6899 / JCM 31910 / BCRC 17059 / LMG 24140 / F1).